We begin with the raw amino-acid sequence, 108 residues long: Phosphoribosyl-AMP cyclohydrolase (108 aa).

D72 contributes to the Mg(2+) binding site. C73 is a binding site for Zn(2+). D74 and D76 together coordinate Mg(2+). Residues C89 and C96 each contribute to the Zn(2+) site.

Belongs to the PRA-CH family. Homodimer. Requires Mg(2+) as cofactor. Zn(2+) serves as cofactor.

It localises to the cytoplasm. It carries out the reaction 1-(5-phospho-beta-D-ribosyl)-5'-AMP + H2O = 1-(5-phospho-beta-D-ribosyl)-5-[(5-phospho-beta-D-ribosylamino)methylideneamino]imidazole-4-carboxamide. Its pathway is amino-acid biosynthesis; L-histidine biosynthesis; L-histidine from 5-phospho-alpha-D-ribose 1-diphosphate: step 3/9. Its function is as follows. Catalyzes the hydrolysis of the adenine ring of phosphoribosyl-AMP. The sequence is that of Phosphoribosyl-AMP cyclohydrolase from Archaeoglobus fulgidus (strain ATCC 49558 / DSM 4304 / JCM 9628 / NBRC 100126 / VC-16).